Reading from the N-terminus, the 360-residue chain is Photosystem II protein D1 (360 aa).

Helical transmembrane passes span 29 to 46, 118 to 133, and 142 to 156; these read YIGWFGVLMIPTLLTATS, HFLTGVACYIGREWEL, and WISVAFTAPVAAAAA. Chlorophyll a is bound at residue His118. Tyr126 is a pheophytin a binding site. [CaMn4O5] cluster is bound by residues Asp170 and Glu189. Residues 197-218 form a helical membrane-spanning segment; the sequence is FHQLGVAGVFGGSLFSAMHGSL. His198 is a chlorophyll a binding site. A quinone contacts are provided by residues His215 and 264–265; that span reads SF. His215 is a Fe cation binding site. Position 272 (His272) interacts with Fe cation. The helical transmembrane segment at 274-288 threads the bilayer; the sequence is FLGLWPVVGIWLTAL. [CaMn4O5] cluster-binding residues include His332, Glu333, Asp342, and Ala344. The propeptide occupies 345 to 360; sequence SGESLPVALTAPAVNG.

The protein belongs to the reaction center PufL/M/PsbA/D family. In terms of assembly, PSII is composed of 1 copy each of membrane proteins PsbA, PsbB, PsbC, PsbD, PsbE, PsbF, PsbH, PsbI, PsbJ, PsbK, PsbL, PsbM, PsbT, PsbX, PsbY, PsbZ, Psb30/Ycf12, at least 3 peripheral proteins of the oxygen-evolving complex and a large number of cofactors. It forms dimeric complexes. The cofactor is The D1/D2 heterodimer binds P680, chlorophylls that are the primary electron donor of PSII, and subsequent electron acceptors. It shares a non-heme iron and each subunit binds pheophytin, quinone, additional chlorophylls, carotenoids and lipids. D1 provides most of the ligands for the Mn4-Ca-O5 cluster of the oxygen-evolving complex (OEC). There is also a Cl(-1) ion associated with D1 and D2, which is required for oxygen evolution. The PSII complex binds additional chlorophylls, carotenoids and specific lipids.. In terms of processing, tyr-161 forms a radical intermediate that is referred to as redox-active TyrZ, YZ or Y-Z. C-terminally processed by CTPA; processing is essential to allow assembly of the oxygen-evolving complex and thus photosynthetic growth.

The protein resides in the plastid. Its subcellular location is the chloroplast thylakoid membrane. It catalyses the reaction 2 a plastoquinone + 4 hnu + 2 H2O = 2 a plastoquinol + O2. Its function is as follows. Photosystem II (PSII) is a light-driven water:plastoquinone oxidoreductase that uses light energy to abstract electrons from H(2)O, generating O(2) and a proton gradient subsequently used for ATP formation. It consists of a core antenna complex that captures photons, and an electron transfer chain that converts photonic excitation into a charge separation. The D1/D2 (PsbA/PsbD) reaction center heterodimer binds P680, the primary electron donor of PSII as well as several subsequent electron acceptors. This Porphyra purpurea (Red seaweed) protein is Photosystem II protein D1.